Reading from the N-terminus, the 107-residue chain is Putative double-stranded DNA mimic protein HI_1450 (107 aa).

This sequence belongs to the putative dsDNA mimic protein family. In terms of assembly, monomer in solution. Interacts with the DNA-binding protein HU.

In terms of biological role, may act as a double-stranded DNA (dsDNA) mimic. Probably regulates the activity of the DNA-binding protein HU. This chain is Putative double-stranded DNA mimic protein HI_1450, found in Haemophilus influenzae (strain ATCC 51907 / DSM 11121 / KW20 / Rd).